Consider the following 784-residue polypeptide: Endonuclease MutS2 (784 aa).

335–342 (GPNTGGKT) lines the ATP pocket. The 76-residue stretch at 709-784 (LDLRGERYED…GTGVTIVELK (76 aa)) folds into the Smr domain.

The protein belongs to the DNA mismatch repair MutS family. MutS2 subfamily. As to quaternary structure, homodimer. Binds to stalled ribosomes, contacting rRNA.

Its function is as follows. Endonuclease that is involved in the suppression of homologous recombination and thus may have a key role in the control of bacterial genetic diversity. Acts as a ribosome collision sensor, splitting the ribosome into its 2 subunits. Detects stalled/collided 70S ribosomes which it binds and splits by an ATP-hydrolysis driven conformational change. Acts upstream of the ribosome quality control system (RQC), a ribosome-associated complex that mediates the extraction of incompletely synthesized nascent chains from stalled ribosomes and their subsequent degradation. Probably generates substrates for RQC. This Geobacillus kaustophilus (strain HTA426) protein is Endonuclease MutS2.